The following is a 218-amino-acid chain: 3-dehydroquinate dehydratase (218 aa).

Residues 29 to 31 and Arg56 each bind 3-dehydroquinate; that span reads EFR. His116 acts as the Proton donor/acceptor in catalysis. Lys142 serves as the catalytic Schiff-base intermediate with substrate. 3 residues coordinate 3-dehydroquinate: Arg180, Ser200, and Gln204.

This sequence belongs to the type-I 3-dehydroquinase family. Homodimer.

It catalyses the reaction 3-dehydroquinate = 3-dehydroshikimate + H2O. The protein operates within metabolic intermediate biosynthesis; chorismate biosynthesis; chorismate from D-erythrose 4-phosphate and phosphoenolpyruvate: step 3/7. Its function is as follows. Involved in the third step of the chorismate pathway, which leads to the biosynthesis of aromatic amino acids. Catalyzes the cis-dehydration of 3-dehydroquinate (DHQ) and introduces the first double bond of the aromatic ring to yield 3-dehydroshikimate. This Methanococcus vannielii (strain ATCC 35089 / DSM 1224 / JCM 13029 / OCM 148 / SB) protein is 3-dehydroquinate dehydratase.